A 269-amino-acid polypeptide reads, in one-letter code: Hydroxyethylthiazole kinase (269 aa).

Methionine 48 is a substrate binding site. ATP is bound by residues lysine 124 and threonine 170. Substrate is bound at residue glycine 197.

It belongs to the Thz kinase family. Requires Mg(2+) as cofactor.

It carries out the reaction 5-(2-hydroxyethyl)-4-methylthiazole + ATP = 4-methyl-5-(2-phosphooxyethyl)-thiazole + ADP + H(+). It participates in cofactor biosynthesis; thiamine diphosphate biosynthesis; 4-methyl-5-(2-phosphoethyl)-thiazole from 5-(2-hydroxyethyl)-4-methylthiazole: step 1/1. In terms of biological role, catalyzes the phosphorylation of the hydroxyl group of 4-methyl-5-beta-hydroxyethylthiazole (THZ). This Clostridium kluyveri (strain NBRC 12016) protein is Hydroxyethylthiazole kinase.